The following is a 366-amino-acid chain: 3-isopropylmalate dehydrogenase (366 aa).

76–89 (GPKWDHNPASLRPE) is a binding site for NAD(+). Substrate contacts are provided by arginine 96, arginine 106, arginine 134, and aspartate 222. Aspartate 222, aspartate 246, and aspartate 250 together coordinate Mg(2+). Residue 280-292 (GSAPDIAGQGKAN) participates in NAD(+) binding.

Belongs to the isocitrate and isopropylmalate dehydrogenases family. LeuB type 1 subfamily. Homodimer. Requires Mg(2+) as cofactor. It depends on Mn(2+) as a cofactor.

The protein localises to the cytoplasm. The catalysed reaction is (2R,3S)-3-isopropylmalate + NAD(+) = 4-methyl-2-oxopentanoate + CO2 + NADH. The protein operates within amino-acid biosynthesis; L-leucine biosynthesis; L-leucine from 3-methyl-2-oxobutanoate: step 3/4. Its function is as follows. Catalyzes the oxidation of 3-carboxy-2-hydroxy-4-methylpentanoate (3-isopropylmalate) to 3-carboxy-4-methyl-2-oxopentanoate. The product decarboxylates to 4-methyl-2 oxopentanoate. The sequence is that of 3-isopropylmalate dehydrogenase (leuB) from Heyndrickxia coagulans (Weizmannia coagulans).